The following is a 596-amino-acid chain: Alkaline phosphatase 4 (596 aa).

A signal peptide spans Met-1–Ala-20. Asp-93 contributes to the Mg(2+) binding site. Position 93 (Asp-93) interacts with Zn(2+). The Phosphoserine intermediate role is filled by Ser-144. Residues His-202 and Thr-204 each coordinate Mg(2+). N-linked (GlcNAc...) asparagine glycans are attached at residues Asn-262 and Asn-297. Position 369 (Glu-369) interacts with Mg(2+). Residues Asp-374 and His-378 each coordinate Zn(2+). N-linked (GlcNAc...) asparagine glycosylation is present at Asn-401. Zn(2+)-binding residues include Asp-415 and His-416. 2 N-linked (GlcNAc...) asparagine glycosylation sites follow: Asn-464 and Asn-470. His-504 is a Zn(2+) binding site. An intrachain disulfide couples Cys-539 to Cys-550. The segment covering Asp-548–Asn-566 has biased composition (basic and acidic residues). Residues Asp-548–Asn-570 form a disordered region. The GPI-anchor amidated asparagine moiety is linked to residue Asn-570. A helical membrane pass occupies residues Gly-571–Leu-591. Residues Gly-571–Leu-596 constitute a propeptide, removed in mature form.

It belongs to the alkaline phosphatase family. Homodimer. It depends on Mg(2+) as a cofactor. The cofactor is Zn(2+). As to expression, ellipsoid body ring neurons in the adult brain and in the lower Malpighian tubule and ureter.

It is found in the cell membrane. The enzyme catalyses a phosphate monoester + H2O = an alcohol + phosphate. In terms of biological role, important role in neural and renal epithelial function. This chain is Alkaline phosphatase 4, found in Drosophila melanogaster (Fruit fly).